The chain runs to 180 residues: Large ribosomal subunit protein bL19 (180 aa).

This sequence belongs to the bacterial ribosomal protein bL19 family.

Functionally, this protein is located at the 30S-50S ribosomal subunit interface and may play a role in the structure and function of the aminoacyl-tRNA binding site. The chain is Large ribosomal subunit protein bL19 from Allorhizobium ampelinum (strain ATCC BAA-846 / DSM 112012 / S4) (Agrobacterium vitis (strain S4)).